We begin with the raw amino-acid sequence, 167 residues long: Protein FAM163B (167 aa).

Residues 6 to 26 (VVITGGILATVILLCIIAVLC) traverse the membrane as a helical segment. Phosphoserine is present on Ser-40.

Belongs to the FAM163 family.

It is found in the membrane. The sequence is that of Protein FAM163B (Fam163b) from Mus musculus (Mouse).